Reading from the N-terminus, the 308-residue chain is Cytochrome c biogenesis protein CcsA (308 aa).

Helical transmembrane passes span 2-22, 44-64, 71-91, 143-163, 212-232, 247-267, and 273-293; these read IVST…SILI, GMLI…IYLG, LSES…IGYF, MILG…LMVI, VISL…VWAN, WAFI…NINL, and AIVA…VNLV.

Belongs to the CcmF/CycK/Ccl1/NrfE/CcsA family. As to quaternary structure, may interact with Ccs1.

The protein localises to the plastid membrane. Functionally, required during biogenesis of c-type cytochromes (cytochrome c6 and cytochrome f) at the step of heme attachment. In Cuscuta reflexa (Southern Asian dodder), this protein is Cytochrome c biogenesis protein CcsA.